Here is a 248-residue protein sequence, read N- to C-terminus: Triosephosphate isomerase (248 aa).

14-16 serves as a coordination point for substrate; that stretch reads NWK. Histidine 99 serves as the catalytic Electrophile. Glutamate 170 serves as the catalytic Proton acceptor. Substrate-binding positions include glycine 176, serine 212, and 233-234; that span reads GG.

Belongs to the triosephosphate isomerase family. Homodimer.

Its subcellular location is the cytoplasm. It catalyses the reaction D-glyceraldehyde 3-phosphate = dihydroxyacetone phosphate. Its pathway is carbohydrate biosynthesis; gluconeogenesis. The protein operates within carbohydrate degradation; glycolysis; D-glyceraldehyde 3-phosphate from glycerone phosphate: step 1/1. Involved in the gluconeogenesis. Catalyzes stereospecifically the conversion of dihydroxyacetone phosphate (DHAP) to D-glyceraldehyde-3-phosphate (G3P). This chain is Triosephosphate isomerase, found in Bordetella bronchiseptica (strain ATCC BAA-588 / NCTC 13252 / RB50) (Alcaligenes bronchisepticus).